An 86-amino-acid polypeptide reads, in one-letter code: uncharacterized protein (86 aa).

This is an uncharacterized protein from Saccharomyces cerevisiae (strain ATCC 204508 / S288c) (Baker's yeast).